The chain runs to 190 residues: Interferon alpha-9 (190 aa).

Residues 1 to 23 form the signal peptide; that stretch reads MARPFAFLMVLVVISYWSTCSLG. Intrachain disulfides connect cysteine 24/cysteine 122 and cysteine 52/cysteine 162. N-linked (GlcNAc...) asparagine glycosylation occurs at asparagine 101.

This sequence belongs to the alpha/beta interferon family.

It is found in the secreted. Functionally, produced by macrophages, IFN-alpha have antiviral activities. Interferon stimulates the production of two enzymes: a protein kinase and an oligoadenylate synthetase. This chain is Interferon alpha-9 (Ifna9), found in Mus musculus (Mouse).